Reading from the N-terminus, the 143-residue chain is Large ribosomal subunit protein uL16 (143 aa).

A compositionally biased stretch (basic residues) spans 1–17 (MLQPKRTKFRKAHKGRI). Residues 1-21 (MLQPKRTKFRKAHKGRIHGNA) are disordered.

It belongs to the universal ribosomal protein uL16 family. As to quaternary structure, part of the 50S ribosomal subunit.

Its function is as follows. Binds 23S rRNA and is also seen to make contacts with the A and possibly P site tRNAs. In Rhizorhabdus wittichii (strain DSM 6014 / CCUG 31198 / JCM 15750 / NBRC 105917 / EY 4224 / RW1) (Sphingomonas wittichii), this protein is Large ribosomal subunit protein uL16.